Consider the following 152-residue polypeptide: SsrA-binding protein (152 aa).

A compositionally biased stretch (basic and acidic residues) spans 129–140 (KREDMKKKDSQR). Residues 129-152 (KREDMKKKDSQRELSQALKSKNRE) are disordered. Over residues 141-152 (ELSQALKSKNRE) the composition is skewed to polar residues.

This sequence belongs to the SmpB family.

It localises to the cytoplasm. Functionally, required for rescue of stalled ribosomes mediated by trans-translation. Binds to transfer-messenger RNA (tmRNA), required for stable association of tmRNA with ribosomes. tmRNA and SmpB together mimic tRNA shape, replacing the anticodon stem-loop with SmpB. tmRNA is encoded by the ssrA gene; the 2 termini fold to resemble tRNA(Ala) and it encodes a 'tag peptide', a short internal open reading frame. During trans-translation Ala-aminoacylated tmRNA acts like a tRNA, entering the A-site of stalled ribosomes, displacing the stalled mRNA. The ribosome then switches to translate the ORF on the tmRNA; the nascent peptide is terminated with the 'tag peptide' encoded by the tmRNA and targeted for degradation. The ribosome is freed to recommence translation, which seems to be the essential function of trans-translation. This is SsrA-binding protein from Pelobacter propionicus (strain DSM 2379 / NBRC 103807 / OttBd1).